The following is a 142-amino-acid chain: Large ribosomal subunit protein uL13 (142 aa).

This sequence belongs to the universal ribosomal protein uL13 family. As to quaternary structure, part of the 50S ribosomal subunit.

This protein is one of the early assembly proteins of the 50S ribosomal subunit, although it is not seen to bind rRNA by itself. It is important during the early stages of 50S assembly. This is Large ribosomal subunit protein uL13 from Opitutus terrae (strain DSM 11246 / JCM 15787 / PB90-1).